We begin with the raw amino-acid sequence, 518 residues long: MSIAWSSVFKRELRLERFLPRVYSTKVPDNAPRAADNEQWLETLRPITHPEQKKSDHDVSYTRHINVPLGEVTSVNYLQRYNKHKHSQGNFVDVRIVKCKSGAGGSGAVSFFRDAGRSIGPPDGGDGGAGGSVYIQAVAGLGSLAKMKTTYTAEDGEAGAARQLDGMRGRDVLIQVPVGTVVKWCLPPQKVRELVEREMRKDNNATLRSILGSTAVNLSVSSGSHRKKIQLYRHEMAESWLFKDKAKEYHENKDWFKDLHKKMEAYDHSLEQSELFNDQFPLAGLDLNQPMTKPVCLLKGGQGGLGNMHFLTNLIRNPRFSKPGRNGLEQHFLFELKSIADLGLIGLPNAGKSTILNKISNAKPKIGHWQFTTLSPTIGTVSLGFGQDVFTVADIPGIIQGASLDKGMGLEFLRHIERSNGWVFVLDLSNKNPLNDLQLLIEEVGTLEKVKTKNILIVCNKVDIDAEKSESFAKYLQVEKFSKSQEWDCVPISALREENIDVLKKKMFKCARQSEFDK.

A mitochondrion-targeting transit peptide spans 1 to 23 (MSIAWSSVFKRELRLERFLPRVY). In terms of domain architecture, Obg spans 89–339 (GNFVDVRIVK…QHFLFELKSI (251 aa)). Positions 340-512 (ADLGLIGLPN…LKKKMFKCAR (173 aa)) constitute an OBG-type G domain. Residues 346–353 (GLPNAGKS), 394–398 (DIPGI), and 460–463 (NKVD) contribute to the GTP site.

The protein belongs to the TRAFAC class OBG-HflX-like GTPase superfamily. OBG GTPase family. Interacts with the mitochondrial 54S large ribosomal subunit.

It is found in the mitochondrion inner membrane. Required for mitochondrial protein synthesis. May be involved in mitochondrial ribosome biogenesis. This Saccharomyces cerevisiae (strain ATCC 204508 / S288c) (Baker's yeast) protein is GTPase MTG2, mitochondrial (MTG2).